A 445-amino-acid polypeptide reads, in one-letter code: Exodeoxyribonuclease 7 large subunit (445 aa).

Belongs to the XseA family. In terms of assembly, heterooligomer composed of large and small subunits.

The protein resides in the cytoplasm. It carries out the reaction Exonucleolytic cleavage in either 5'- to 3'- or 3'- to 5'-direction to yield nucleoside 5'-phosphates.. Functionally, bidirectionally degrades single-stranded DNA into large acid-insoluble oligonucleotides, which are then degraded further into small acid-soluble oligonucleotides. The protein is Exodeoxyribonuclease 7 large subunit of Shewanella halifaxensis (strain HAW-EB4).